The chain runs to 440 residues: MTCRPALSDSHPPEPGTPSSPSFGVCGDRPLLRERGQHEVFCGLAGIIWLHRKIQDAFFLIIGSRTCAHLMQSAAGVMIFAEPRFATAVLEEQDLAGLADAQDEIDRVVARLLERRPDIRLLFLVGSCPSEVIKIDLQRAALRLSKVHGARTRVVSYSGSGLETTFTQGEDACLAALVPDLPSAAADEAPDLLVVGTLPDVVEDQFGRLFAEMGIARTAFLPPRRSTALPAIGPKTRFLLAQPFLGDTARCLEARGARRLAAPFPFGVEGTTGWLAAAAQAFGVDDLTFRRVTAPGRERAARALERQRATLEGKRVFFFPESQLEIPLARFLVRELGMEAIEIGTPYLHRAHLAEELALLPATALLSEGQDVDRQLDRCRAARPDLVVCGLGLANPLEAEGITTKWSIELVFSPIHGYEQAGDLAELFARPLLRRALLKV.

The segment at 1–24 is disordered; that stretch reads MTCRPALSDSHPPEPGTPSSPSFG. Positions 42, 67, and 128 each coordinate [4Fe-4S] cluster.

The protein belongs to the BchN/ChlN family. In terms of assembly, protochlorophyllide reductase is composed of three subunits; BchL, BchN and BchB. Forms a heterotetramer of two BchB and two BchN subunits. [4Fe-4S] cluster is required as a cofactor.

The enzyme catalyses chlorophyllide a + oxidized 2[4Fe-4S]-[ferredoxin] + 2 ADP + 2 phosphate = protochlorophyllide a + reduced 2[4Fe-4S]-[ferredoxin] + 2 ATP + 2 H2O. It functions in the pathway porphyrin-containing compound metabolism; bacteriochlorophyll biosynthesis (light-independent). In terms of biological role, component of the dark-operative protochlorophyllide reductase (DPOR) that uses Mg-ATP and reduced ferredoxin to reduce ring D of protochlorophyllide (Pchlide) to form chlorophyllide a (Chlide). This reaction is light-independent. The NB-protein (BchN-BchB) is the catalytic component of the complex. This Rhodospirillum rubrum (strain ATCC 11170 / ATH 1.1.1 / DSM 467 / LMG 4362 / NCIMB 8255 / S1) protein is Light-independent protochlorophyllide reductase subunit N.